The chain runs to 754 residues: 5-methyltetrahydropteroyltriglutamate--homocysteine methyltransferase (754 aa).

Residues 17-20 and lysine 117 each bind 5-methyltetrahydropteroyltri-L-glutamate; that span reads RELK. L-homocysteine is bound by residues 431-433 and glutamate 484; that span reads IGS. L-methionine contacts are provided by residues 431–433 and glutamate 484; that span reads IGS. 5-methyltetrahydropteroyltri-L-glutamate-binding positions include 515-516 and tryptophan 561; that span reads RC. Aspartate 599 contributes to the L-homocysteine binding site. An L-methionine-binding site is contributed by aspartate 599. Residue glutamate 605 coordinates 5-methyltetrahydropteroyltri-L-glutamate. The Zn(2+) site is built by histidine 641, cysteine 643, and glutamate 665. The active-site Proton donor is histidine 694. Cysteine 726 is a binding site for Zn(2+).

This sequence belongs to the vitamin-B12 independent methionine synthase family. Zn(2+) is required as a cofactor.

The catalysed reaction is 5-methyltetrahydropteroyltri-L-glutamate + L-homocysteine = tetrahydropteroyltri-L-glutamate + L-methionine. Its pathway is amino-acid biosynthesis; L-methionine biosynthesis via de novo pathway; L-methionine from L-homocysteine (MetE route): step 1/1. In terms of biological role, catalyzes the transfer of a methyl group from 5-methyltetrahydrofolate to homocysteine resulting in methionine formation. This Salmonella typhimurium (strain LT2 / SGSC1412 / ATCC 700720) protein is 5-methyltetrahydropteroyltriglutamate--homocysteine methyltransferase.